The sequence spans 68 residues: Antimicrobial peptide Eval655 (68 aa).

Residues 1–23 (MKTQFVVLLVALVLLQMFAQSEA) form the signal peptide. Leu-36 is modified (leucine amide). Positions 37 to 68 (GKRGLKNLDDFDDIFDDDLSSADLEFLKQLMR) are excised as a propeptide.

The protein belongs to the non-disulfide-bridged peptide (NDBP) superfamily. Short antimicrobial peptide (group 4) family. In terms of tissue distribution, expressed by the venom gland.

The protein localises to the secreted. Functionally, probable antimicrobial peptide. Shows low inhibitory activity against herpes simplex virus type 1 (HSV-1). This is Antimicrobial peptide Eval655 from Euscorpiops validus (Scorpion).